The primary structure comprises 47 residues: Delta-actitoxin-Axm1g (47 aa).

3 cysteine pairs are disulfide-bonded: Cys-4-Cys-44, Cys-6-Cys-34, and Cys-27-Cys-45.

This sequence belongs to the sea anemone sodium channel inhibitory toxin family. Type I subfamily.

It localises to the secreted. The protein resides in the nematocyst. This Anthopleura xanthogrammica (Giant green sea anemone) protein is Delta-actitoxin-Axm1g.